We begin with the raw amino-acid sequence, 393 residues long: Prokineticin receptor 1 (393 aa).

Over 1–62 the chain is Extracellular; sequence METTVGALGE…TNSRTFFAAK (62 aa). Asn-11 is a glycosylation site (N-linked (GlcNAc...) asparagine). The chain crosses the membrane as a helical span at residues 63 to 83; it reads IVIGMALVGIMLVCGIGNFIF. The Cytoplasmic segment spans residues 84–98; it reads ITALARYKKLRNLTN. A helical membrane pass occupies residues 99–119; it reads LLIANLAISDFLVAIVCCPFE. Residues 120–146 lie on the Extracellular side of the membrane; it reads MDYYVVRQLSWEHGHVLCASVNYLRTV. The cysteines at positions 137 and 217 are disulfide-linked. A helical transmembrane segment spans residues 147–167; that stretch reads SLYVSTNALLAIAIDRYLAIV. Over 168-179 the chain is Cytoplasmic; it reads HPLRPRMKCQTA. A helical membrane pass occupies residues 180–200; it reads AGLIFLVWSVSILIAIPAAYF. Residues 201 to 232 lie on the Extracellular side of the membrane; that stretch reads TTETVLVIVERQEKIFCGQIWPVDQQFYYRSY. The chain crosses the membrane as a helical span at residues 233–253; sequence FLLVFGLEFVGPVVAMTLCYA. The Cytoplasmic segment spans residues 254 to 282; the sequence is RVSRELWFKAVPGFQTEQIRRRLRCRRRT. The helical transmembrane segment at 283–303 threads the bilayer; it reads VLGLVCVLSAYVLCWAPFYGF. The Extracellular segment spans residues 304-322; sequence TIVRDFFPSVFVKEKHYLT. A helical transmembrane segment spans residues 323 to 343; it reads AFYVVECIAMSNSMINTLCFV. At 344-393 the chain is on the cytoplasmic side; sequence TVRNNTSKYLKRILRLQWRASPSGSKASADLDLRTTGIPATEEVDCIRLK.

The protein belongs to the G-protein coupled receptor 1 family. As to expression, expressed at high levels in the heart, skeletal muscle and pancreas. Expressed at lower levels in the brain, lung, liver and kidney.

Its subcellular location is the cell membrane. Functionally, receptor for prokineticin 1. Exclusively coupled to the G(q) subclass of heteromeric G proteins. Activation leads to mobilization of calcium, stimulation of phosphoinositide turnover and activation of p44/p42 mitogen-activated protein kinase. May play a role during early pregnancy. The protein is Prokineticin receptor 1 (Prokr1) of Mus musculus (Mouse).